A 351-amino-acid chain; its full sequence is MNVAIVGATGYGGIQSVNLLKDNKNYKISYLGGYKTSGTKWSDNFPFIKLDSNNLIEKISIDRIADKADVALLCLPNGISSTLTRGLLEKGVKVIDLSADYRYKSLEQWKRIYSNEAAKYKRDDDDLCKEAVYGLPEINNKDISKARLIACPGCYPTSALIPLIPFLSQGIIDNEGIIIDSKSGTSGGGRESSQKLLFSECGDGLSAYGLINHRHTSEIEQIASFISGNDIELLFTPHLLPMIRGMHSTIYGRLRDPGLTSSDCRIILENFYRNYSNIRVLPVDIYPSTKWVKNTNEIHLSVKVDNRNGRIILLSVIDNLLKGQTGQAIQNLNLISGLPLNNGLEMINHYP.

Residue cysteine 154 is part of the active site.

This sequence belongs to the NAGSA dehydrogenase family. Type 1 subfamily.

It is found in the cytoplasm. The enzyme catalyses N-acetyl-L-glutamate 5-semialdehyde + phosphate + NADP(+) = N-acetyl-L-glutamyl 5-phosphate + NADPH + H(+). The protein operates within amino-acid biosynthesis; L-arginine biosynthesis; N(2)-acetyl-L-ornithine from L-glutamate: step 3/4. Functionally, catalyzes the NADPH-dependent reduction of N-acetyl-5-glutamyl phosphate to yield N-acetyl-L-glutamate 5-semialdehyde. The protein is N-acetyl-gamma-glutamyl-phosphate reductase of Prochlorococcus marinus (strain MIT 9515).